A 24-amino-acid polypeptide reads, in one-letter code: Brevinin-1SY (24 aa).

C18 and C24 are oxidised to a cystine.

In terms of tissue distribution, expressed by the skin glands.

Its subcellular location is the secreted. Functionally, antibacterial activity against Gram-positive bacterium S.aureus and Gram-negative bacterium E.coli. The polypeptide is Brevinin-1SY (Lithobates sylvaticus (Wood frog)).